A 758-amino-acid polypeptide reads, in one-letter code: Probable serine/threonine-protein kinase HAL5-like (758 aa).

2 disordered regions span residues 1–170 (MGTV…SADD) and 189–252 (IDNA…HRGR). The span at 22 to 57 (RSISGSIKSLFKPSSVQNSTPTVSPHESSPPLGNSD) shows a compositional bias: polar residues. Positions 58–69 (NLKKLVDTKRAE) are enriched in basic and acidic residues. Low complexity predominate over residues 129-153 (SSPRQSSSTNDRSSITSATSSVTSA). Basic and acidic residues predominate over residues 216 to 226 (DKNFESSEYEI). The segment covering 227 to 247 (RSNSLSRIHSTPQNESPTVNN) has biased composition (polar residues). Residues 442–744 (KSMGVVLGHG…IDQLLQSPWM (303 aa)) form the Protein kinase domain. Residues 448–456 (LGHGAYGVV) and Lys485 contribute to the ATP site. Asp595 serves as the catalytic Proton acceptor.

This sequence belongs to the protein kinase superfamily. CAMK Ser/Thr protein kinase family. NPR/HAL subfamily. HAL5 sub-subfamily.

The enzyme catalyses L-seryl-[protein] + ATP = O-phospho-L-seryl-[protein] + ADP + H(+). It catalyses the reaction L-threonyl-[protein] + ATP = O-phospho-L-threonyl-[protein] + ADP + H(+). This is Probable serine/threonine-protein kinase HAL5-like from Vanderwaltozyma polyspora (strain ATCC 22028 / DSM 70294 / BCRC 21397 / CBS 2163 / NBRC 10782 / NRRL Y-8283 / UCD 57-17) (Kluyveromyces polysporus).